Reading from the N-terminus, the 110-residue chain is MMKGQLAGLMKQAQQMQENMKKMQEQLAQIEVEGQSGAGLVKVVMTCKNDVKRVTIDPSLLAEGEDKDLLEDLVAAAFNDAVRKAEATTQEKMGSMTSGLPLPPGFKLPF.

Over residues 88 to 98 (TTQEKMGSMTS) the composition is skewed to polar residues. A disordered region spans residues 88–110 (TTQEKMGSMTSGLPLPPGFKLPF). Residues 101–110 (PLPPGFKLPF) show a composition bias toward pro residues.

It belongs to the YbaB/EbfC family. In terms of assembly, homodimer.

It localises to the cytoplasm. It is found in the nucleoid. Binds to DNA and alters its conformation. May be involved in regulation of gene expression, nucleoid organization and DNA protection. The polypeptide is Nucleoid-associated protein RALTA_A1934 (Cupriavidus taiwanensis (strain DSM 17343 / BCRC 17206 / CCUG 44338 / CIP 107171 / LMG 19424 / R1) (Ralstonia taiwanensis (strain LMG 19424))).